Consider the following 443-residue polypeptide: Flavastacin (443 aa).

The first 15 residues, 1–15 (MTRKLLILSGCLILA), serve as a signal peptide directing secretion. The propeptide at 16 to 91 (LNSCKSDMET…ANPDISTVER (76 aa)) is activation peptide. Residues 92-289 (STIVSSFIKT…AGINHLYGPV (198 aa)) form the Peptidase M12A domain. Histidine 189 is a binding site for Zn(2+). The active site involves glutamate 190. Residues histidine 193 and histidine 199 each coordinate Zn(2+). Positions 297–440 (GTYTLTTSLA…PYTKQRFTLT (144 aa)) constitute a Ricin B-type lectin domain. Serine 355 is a glycosylation site (O-linked (Man...) serine).

It depends on Zn(2+) as a cofactor. Post-translationally, O-linked glycan consists of the Man, GlcNAc, GlcU, Glc, GlcU, Rha, Man heptasaccharide.

It carries out the reaction Hydrolyzes polypeptides on the amino-side of Asp in -Xaa-|-Asp-. Acts very slowly on -Xaa-|-Glu.. Zinc metallendopeptidase that cleaves preferentially on N-terminal side of aspartate-containing substrates. This is Flavastacin from Elizabethkingia meningoseptica (Chryseobacterium meningosepticum).